The chain runs to 366 residues: Methyltransferase calH (366 aa).

S-adenosyl-L-methionine-binding positions include Thr189, Asp216, and Asn245–Ala246.

This sequence belongs to the class I-like SAM-binding methyltransferase superfamily.

Its pathway is secondary metabolite biosynthesis. In terms of biological role, methyltransferase; part of the gene cluster that mediates the biosynthesis of calbistrin A and related compounds. Calbistrin A is a secondary metabolite with an interesting structure that was recently found to have bioactivity against leukemia cells. It consists of two polyketides linked by an ester bond: a bicyclic decalin containing polyketide and a linear 12 carbon dioic acid structure. The polyketide synthase calA is probably responsible for forming the decalin moiety. Because calA lacks a designated enoylreductase (ER) domain, the required activity is provided by the trans-enoyl reductase calK. Following release from the PKS, calF then probably catalyzes the oxidation and the subsequent Diels Alder cycloisomerization that lead to the formation of the decalin moiety. The decalin polyketide backbone includes two C-methyl groups, at C7 and C11 in backbone, of which the C7 position is probably methylated by the methyltransferase domain of calA. A candidate for adding the methyl group at C11, if not done by CalA, is the cluster methyltransferase calH. Several additional tailoring enzymes within the cluster could be involved in the modification of the decalin polyketide product. Those include the 3 cytochrome P450 monooxygenases CalE, CalG and CalL, of which one might be responsible for the introduction of the extra hydroxyl group attached to the backbone of the decalin moiety, at position C9 in the backbone, that allows for attachment of the linear moiety. One tailoring enzyme activity that is expected to be involved in biosynthesis of calbistrin is an acyltransferase for connecting the two polyketide synthase products, and which could be performed by the cluster acyltransferase calJ. The enzyme responsible for the biosynthesis of the linear moiety, probably a second PKS, has not been identified yet. The chain is Methyltransferase calH from Penicillium decumbens.